The primary structure comprises 150 residues: Cyclin-dependent kinases regulatory subunit (150 aa).

Residues 115–137 (AAAQQQQQQQQQQQQQQQQHQTQ) are compositionally biased toward low complexity. The interval 115–150 (AAAQQQQQQQQQQQQQQQQHQTQSISNDMQVPPQIS) is disordered.

The protein belongs to the CKS family. Forms a stable but non-covalent complex with the CDC28 protein and with a cyclin.

Functionally, binds to the catalytic subunit of the cyclin dependent kinase (CDC28) and is essential for its biological function. This Saccharomyces cerevisiae (strain ATCC 204508 / S288c) (Baker's yeast) protein is Cyclin-dependent kinases regulatory subunit.